A 258-amino-acid chain; its full sequence is Beta carbonic anhydrase 3 (258 aa).

An N-terminal signal peptide occupies residues 1-28 (MSTESYEDAIKRLGELLSKKSDLGNVAA). A coiled-coil region spans residues 24-54 (GNVAAAKIKKLTDELEELDSNKLDAVERIKS). Phosphothreonine is present on Thr-35. Ser-95 carries the phosphoserine modification. Cys-201 is subject to S-nitrosocysteine.

The protein belongs to the beta-class carbonic anhydrase family. Strongly expressed in aerial tissues including leaves, stems, flowers and siliques, and, to a lower extent, in roots.

Its subcellular location is the cytoplasm. The protein localises to the cytosol. The catalysed reaction is hydrogencarbonate + H(+) = CO2 + H2O. Functionally, reversible hydration of carbon dioxide. The polypeptide is Beta carbonic anhydrase 3 (BCA3) (Arabidopsis thaliana (Mouse-ear cress)).